We begin with the raw amino-acid sequence, 156 residues long: MAVRVLCACVRRLPTAFAPLPRLPTLAAARPLSTTLFAAETRTRPGAPLPALVLAQVPGRVTQLCRQYSDAPPLTLEGIKDRVLYVLKLYDKIDPEKLSVNSHFMKDLGLDSLDQVEIIMAMEDEFGFEIPDIDAEKLMCPQEIVDYIADKKDVYE.

The transit peptide at 1–68 (MAVRVLCACV…GRVTQLCRQY (68 aa)) directs the protein to the mitochondrion. Residues 77–152 (EGIKDRVLYV…EIVDYIADKK (76 aa)) form the Carrier domain. The residue at position 88 (Lys-88) is an N6-acetyllysine. Residue Ser-112 is modified to O-(pantetheine 4'-phosphoryl)serine.

As to quaternary structure, mammalian complex I is composed of 45 different subunits. Interacts with ETFRF1. Identified in a complex composed of MALSU1, MIEF1 upstream open reading frame protein and NDUFAB1; within the trimeric complex MIEF1 upstream open reading frame protein functions as a bridging scaffold that interacts with MALSU1 on one side, and with NDUFAB1 on the other side. The complex interacts with the mitochondrial large ribosomal subunit. Interacts with alpha-1-microglobulin chain; this interaction is required for the maintenance of mitochondrial redox homeostasis. Component of the mitochondrial core iron-sulfur cluster (ISC) complex composed of NFS1, LYRM4, NDUFAB1, ISCU, FXN, and FDX2; this complex is a heterohexamer containing two copies of each monomer. Component of the cyteine desulfurase complex composed of NFS1, LYRM4 and NDUFAB1; this complex contributes to the stability and cysteine desulfurase activity of NFS1. Post-translationally, phosphopantetheinylation at Ser-112 is essential for interactions with LYR motif-containing proteins.

The protein resides in the mitochondrion. Carrier of the growing fatty acid chain in fatty acid biosynthesis. Accessory and non-catalytic subunit of the mitochondrial membrane respiratory chain NADH dehydrogenase (Complex I), which functions in the transfer of electrons from NADH to the respiratory chain. Accessory protein, of the core iron-sulfur cluster (ISC) assembly complex, that regulates, in association with LYRM4, the stability and the cysteine desulfurase activity of NFS1 and participates in the [2Fe-2S] clusters assembly on the scaffolding protein ISCU. The core iron-sulfur cluster (ISC) assembly complex is involved in the de novo synthesis of a [2Fe-2S] cluster, the first step of the mitochondrial iron-sulfur protein biogenesis. This process is initiated by the cysteine desulfurase complex (NFS1:LYRM4:NDUFAB1) that produces persulfide which is delivered on the scaffold protein ISCU in a FXN-dependent manner. Then this complex is stabilized by FDX2 which provides reducing equivalents to accomplish the [2Fe-2S] cluster assembly. Finally, the [2Fe-2S] cluster is transferred from ISCU to chaperone proteins, including HSCB, HSPA9 and GLRX5. The chain is Acyl carrier protein, mitochondrial from Bos taurus (Bovine).